A 551-amino-acid polypeptide reads, in one-letter code: MPSARLQQQFIRLWQCCEGKSQETTLNELAALLSCSRRHMRTLLNTMQDRGWLTWEAEVGRGKRSRLTFLYTGLALQQQRAEDLLEQDRIDQLVQLVGDKATVRQMLVSHLGRSFRQGRHILRVLYYRPLRNLLPGSALRRSETHIARQIFSSLTRINEENGELEADIAHHWQQISPLHWRFFLRPGVHFHHGRELEMDDVIASLKRINTLPLYSHIANIVSPTPWTLDIHLTQPDRWLPLLLGQVPAMILPREWETLSNFASHPIGTGPYAVIRNSTNQLKIQAFDDFFGYRALIDEVNVWVLPEIADEPAGGLMLKGPQGEEKEIESRLEEGCYYLLFDSRTHRGANQQVRDWVSYVLSPTNLVYFAEEQYQQLWFPAYGLLPRWHHARTIKSEKPAGLESLTLTFYQDHSEHRVIAGIMQQILASHQVTLEIKEISYDQWHEGEIESDIWLNSANFTLPLDFSLFAHLCEVPLLQHCIPIDWQADAARWRNGEMNLANWCQQLVASKAMVPLIHHWLIIQGQRSMRGLRMNTLGWFDFKSAWFAPPDP.

The HTH marR-type domain maps to 1 to 116 (MPSARLQQQF…LVSHLGRSFR (116 aa)). Positions 26–49 (LNELAALLSCSRRHMRTLLNTMQD) form a DNA-binding region, H-T-H motif. The tract at residues 163–492 (ELEADIAHHW…IDWQADAARW (330 aa)) is solute-binding.

In terms of biological role, activates the small RNA gene sgrS under glucose-phosphate stress conditions as well as yfdZ. Represses its own transcription under both stress and non-stress conditions. Might act as a sensor of the intracellular accumulation of phosphoglucose by binding these molecules in its C-terminal solute-binding domain. The protein is HTH-type transcriptional regulator SgrR of Escherichia coli O1:K1 / APEC.